We begin with the raw amino-acid sequence, 301 residues long: Rhodopsin (301 aa).

Over 1–18 (LHMIHLHWYQYPPMNPMM) the chain is Extracellular. Residues 19–43 (YPLLLVFMLITGILCLAGNFVTIWV) traverse the membrane as a helical segment. The Cytoplasmic portion of the chain corresponds to 44–55 (FMNTKSLRTPAN). A helical transmembrane segment spans residues 56 to 78 (LLVVNLAMSDFLMMFTMFPPMMI). Over 79 to 92 (TCYYHTWTLGATFC) the chain is Extracellular. Cys-92 and Cys-169 are joined by a disulfide. The chain crosses the membrane as a helical span at residues 93–115 (EVYAFLGNLCGCASIWTMVFITF). Residues 116 to 118 (DRY) carry the 'Ionic lock' involved in activated form stabilization motif. At 116-134 (DRYNVIVKGVAGEPLSTKK) the chain is on the cytoplasmic side. The helical transmembrane segment at 135-155 (ASLWILTVWVLSFTWCVAPFF) threads the bilayer. Residues 156-182 (GWNRYVPEGNLTGCGTDYLSEDILSRS) are Extracellular-facing. The N-linked (GlcNAc...) asparagine glycan is linked to Asn-165. The chain crosses the membrane as a helical span at residues 183–204 (YLYIYSTWVYFLPLAITIYCYV). Over 205 to 245 (FIIKAVAAHEKGMRDQAKKMGIKSLRNEEAQKTSAECRLAK) the chain is Cytoplasmic. The helical transmembrane segment at 246–267 (IAMTTVALWFIAWTPYLLINWV) threads the bilayer. At 268–278 (GMFARSYLSPV) the chain is on the extracellular side. Residues 279 to 300 (YTIWGYVFAKANAVYNPIVYAI) form a helical membrane-spanning segment. Lys-288 bears the N6-(retinylidene)lysine mark.

This sequence belongs to the G-protein coupled receptor 1 family. Opsin subfamily. As to quaternary structure, homodimer. Interacts with GNAQ. Post-translationally, contains one covalently linked retinal chromophore.

It is found in the cell projection. It localises to the rhabdomere membrane. In terms of biological role, photoreceptor required for image-forming vision at low light intensity. Can use both retinal and 3-dehydroretinal as visual pigment. Light-induced isomerization of 11-cis to all-trans retinal triggers a conformational change that activates signaling via G-proteins. Signaling via GNAQ probably mediates the activation of phospholipase C. The polypeptide is Rhodopsin (RHO) (Lacunicambarus ludovicianus (Painted devil crayfish)).